Consider the following 155-residue polypeptide: Small ribosomal subunit protein uS7cz/uS7cy (155 aa).

Belongs to the universal ribosomal protein uS7 family. Part of the 30S ribosomal subunit.

It is found in the plastid. The protein localises to the chloroplast. In terms of biological role, one of the primary rRNA binding proteins, it binds directly to 16S rRNA where it nucleates assembly of the head domain of the 30S subunit. This chain is Small ribosomal subunit protein uS7cz/uS7cy (rps7-A), found in Acorus calamus var. americanus (American sweet flag).